A 507-amino-acid chain; its full sequence is ATP synthase subunit alpha 2 (507 aa).

Residue 171–178 coordinates ATP; that stretch reads GDRATGKT.

It belongs to the ATPase alpha/beta chains family. As to quaternary structure, F-type ATPases have 2 components, CF(1) - the catalytic core - and CF(0) - the membrane proton channel. CF(1) has five subunits: alpha(3), beta(3), gamma(1), delta(1), epsilon(1). CF(0) has three main subunits: a(1), b(2) and c(9-12). The alpha and beta chains form an alternating ring which encloses part of the gamma chain. CF(1) is attached to CF(0) by a central stalk formed by the gamma and epsilon chains, while a peripheral stalk is formed by the delta and b chains.

Its subcellular location is the cell inner membrane. The catalysed reaction is ATP + H2O + 4 H(+)(in) = ADP + phosphate + 5 H(+)(out). Functionally, produces ATP from ADP in the presence of a proton gradient across the membrane. The alpha chain is a regulatory subunit. This Gluconobacter oxydans (strain 621H) (Gluconobacter suboxydans) protein is ATP synthase subunit alpha 2.